The primary structure comprises 346 residues: Methylthioribose-1-phosphate isomerase (346 aa).

Substrate is bound by residues 47–49 (RGA), Arg88, and Gln195. Catalysis depends on Asp236, which acts as the Proton donor. 246-247 (NK) is a substrate binding site.

The protein belongs to the eIF-2B alpha/beta/delta subunits family. MtnA subfamily.

It carries out the reaction 5-(methylsulfanyl)-alpha-D-ribose 1-phosphate = 5-(methylsulfanyl)-D-ribulose 1-phosphate. The protein operates within amino-acid biosynthesis; L-methionine biosynthesis via salvage pathway; L-methionine from S-methyl-5-thio-alpha-D-ribose 1-phosphate: step 1/6. Catalyzes the interconversion of methylthioribose-1-phosphate (MTR-1-P) into methylthioribulose-1-phosphate (MTRu-1-P). This Maridesulfovibrio salexigens (strain ATCC 14822 / DSM 2638 / NCIMB 8403 / VKM B-1763) (Desulfovibrio salexigens) protein is Methylthioribose-1-phosphate isomerase.